Reading from the N-terminus, the 464-residue chain is Hydrogen cyanide synthase subunit HcnB (464 aa).

As to quaternary structure, heterotrimer of HcnA, HcnB and HcnC.

The protein resides in the cell membrane. It carries out the reaction glycine + 2 A = hydrogen cyanide + 2 AH2 + CO2. Oxygen is necessary for cyanogenesis. Activated by succinate, glycine methyl ester, glucose and D,L-methionine in addition to glycine. Phenazine methosulfate, methylene blue, 2,6-dichlorophenolindophenol (DCIP) and ferricyanide can replace oxygen for the reaction. Inhibited by pyrrolnitrin and acriflavine at 1 mM concentration. Functionally, a three-component membrane-bound flavoenzyme that catalyzes the formation of hydrogen cyanide, a secondary metabolite, by transfer of electrons to a cyanide-resistant branch of the aerobic respiratory chain. The sequence is that of Hydrogen cyanide synthase subunit HcnB from Pseudomonas aeruginosa (strain ATCC 15692 / DSM 22644 / CIP 104116 / JCM 14847 / LMG 12228 / 1C / PRS 101 / PAO1).